Consider the following 543-residue polypeptide: Zinc metalloproteinase (543 aa).

Residues Met1–Ala24 form the signal peptide. Residues Ala25–Thr207 constitute a propeptide that is removed on maturation. His377 serves as a coordination point for Zn(2+). The active site involves Glu378. Zn(2+) is bound by residues His381 and Glu401. The active-site Proton donor is His463.

Belongs to the peptidase M4 family. Requires Zn(2+) as cofactor.

The protein localises to the secreted. Functionally, cleaves collagen, gelatin, casein, alpha-1-antitrypsin, and bovine insulin. May play a role in the pathogenesis of legionnaires disease. The chain is Zinc metalloproteinase from Legionella pneumophila.